The following is a 595-amino-acid chain: Sialic acid-binding Ig-like lectin 12 (595 aa).

A signal peptide spans 1 to 18; the sequence is MLLLLLLLPPLLCGRVGA. Ig-like V-type domains lie at 19 to 142 and 143 to 269; these read KEQK…VNVT and ASQD…VHVT. Residues 19–481 are Extracellular-facing; it reads KEQKDYLLTM…RPISGVTLGA (463 aa). Cys-44 and Cys-104 are oxidised to a cystine. 4 N-linked (GlcNAc...) asparagine glycosylation sites follow: Asn-140, Asn-179, Asn-230, and Asn-290. Intrachain disulfides connect Cys-166/Cys-299, Cys-171/Cys-231, and Cys-293/Cys-342. The 84-residue stretch at 275–358 folds into the Ig-like C2-type 1 domain; sequence PTFSIPGTLE…AGVTMTRAVR (84 aa). N-linked (GlcNAc...) asparagine glycosylation is found at Asn-360, Asn-367, and Asn-385. The region spanning 365 to 462 is the Ig-like C2-type 2 domain; sequence PQNLTMTVFQ…GSQHISLSLS (98 aa). Cys-401 and Cys-446 are disulfide-bonded. Residues 482 to 502 traverse the membrane as a helical segment; sequence FGGAGATALVFLYFCIIFVVV. The Cytoplasmic portion of the chain corresponds to 503–595; that stretch reads RSCRKKSARP…YEYSEINIPK (93 aa). A disordered region spans residues 512–560; sequence PAVGVGDTGMEDANAVRGSASQGPLIESPADDSPPHHAPPALATPSPEE. Positions 563–568 match the ITIM motif motif; the sequence is IQYASL. A phosphotyrosine mark is found at Tyr-565 and Tyr-588. The short motif at 586 to 591 is the SLAM-like motif element; it reads YEYSEI.

It belongs to the immunoglobulin superfamily. SIGLEC (sialic acid binding Ig-like lectin) family. Isoform Short is highly expressed in spleen, small intestine and adrenal gland; it is lower expressed in thyroid, placenta, brain, stomach, bone marrow, spinal cord and breast. Isoform Long is highly expressed in spleen, small intestine and bone marrow; it is lower expressed in thyroid, placenta, thymus, trachea, stomach, lung, adrenal gland, fetal brain and testis.

The protein localises to the membrane. Functionally, putative adhesion molecule that mediates sialic-acid dependent binding to cells. The sialic acid recognition site may be masked by cis interactions with sialic acids on the same cell surface. This Homo sapiens (Human) protein is Sialic acid-binding Ig-like lectin 12 (SIGLEC12).